A 442-amino-acid chain; its full sequence is 23S rRNA (uracil(1939)-C(5))-methyltransferase RlmD (442 aa).

The TRAM domain occupies 10 to 75 (AKQTAKNCCK…RQYGRAKANK (66 aa)). [4Fe-4S] cluster contacts are provided by C88, C94, C97, and C173. Q276, F305, N310, E326, N353, and D374 together coordinate S-adenosyl-L-methionine. Catalysis depends on C400, which acts as the Nucleophile.

It belongs to the class I-like SAM-binding methyltransferase superfamily. RNA M5U methyltransferase family. RlmD subfamily.

It carries out the reaction uridine(1939) in 23S rRNA + S-adenosyl-L-methionine = 5-methyluridine(1939) in 23S rRNA + S-adenosyl-L-homocysteine + H(+). Functionally, catalyzes the formation of 5-methyl-uridine at position 1939 (m5U1939) in 23S rRNA. This is 23S rRNA (uracil(1939)-C(5))-methyltransferase RlmD from Haemophilus ducreyi (strain 35000HP / ATCC 700724).